Consider the following 531-residue polypeptide: Jacalin-related lectin 16 (531 aa).

Jacalin-type lectin domains lie at 1–87 (MDRS…YFTW), 90–232 (PTKM…YFTT), 235–378 (LISL…YFRP), and 385–528 (TEKV…NVLP).

Belongs to the jacalin lectin family.

The polypeptide is Jacalin-related lectin 16 (JAL16) (Arabidopsis thaliana (Mouse-ear cress)).